The following is an 85-amino-acid chain: Antibacterial factor-related peptide 2 (85 aa).

A signal peptide spans 1-17; it reads MFVRSLFLALLLATIVA. The propeptide occupies 82–85; that stretch reads IKRG.

In terms of tissue distribution, expressed in the pharynx (at protein level). Detected in pharyngeal neurons and secretory cells.

It localises to the secreted. Exhibits antimicrobial activity against the Gram-positive bacteria B.subtilis IFO 3134, K.varians MAFF 118076 and S.aureus ATCC 6538P, the Gram-negative bacteria A.tumefaciens MAFF 1001, B.bacteriovorus MAFF 106101 and K.pneumoniae MAFF 519002, and the yeasts C.krusei MAFF 114085, K.thermotolerans MAFF 113848 and T.delbrueckii MAFF 113811. This chain is Antibacterial factor-related peptide 2, found in Caenorhabditis elegans.